A 264-amino-acid polypeptide reads, in one-letter code: 3-methyl-2-oxobutanoate hydroxymethyltransferase (264 aa).

2 residues coordinate Mg(2+): aspartate 45 and aspartate 84. Residues 45–46 (DS), aspartate 84, and lysine 112 each bind 3-methyl-2-oxobutanoate. Glutamate 114 is a binding site for Mg(2+). The active-site Proton acceptor is glutamate 181.

The protein belongs to the PanB family. Homodecamer; pentamer of dimers. The cofactor is Mg(2+).

It is found in the cytoplasm. It catalyses the reaction 3-methyl-2-oxobutanoate + (6R)-5,10-methylene-5,6,7,8-tetrahydrofolate + H2O = 2-dehydropantoate + (6S)-5,6,7,8-tetrahydrofolate. Its pathway is cofactor biosynthesis; (R)-pantothenate biosynthesis; (R)-pantoate from 3-methyl-2-oxobutanoate: step 1/2. Functionally, catalyzes the reversible reaction in which hydroxymethyl group from 5,10-methylenetetrahydrofolate is transferred onto alpha-ketoisovalerate to form ketopantoate. The sequence is that of 3-methyl-2-oxobutanoate hydroxymethyltransferase from Escherichia fergusonii (strain ATCC 35469 / DSM 13698 / CCUG 18766 / IAM 14443 / JCM 21226 / LMG 7866 / NBRC 102419 / NCTC 12128 / CDC 0568-73).